The primary structure comprises 721 residues: Polyribonucleotide nucleotidyltransferase (721 aa).

Mg(2+)-binding residues include aspartate 495 and aspartate 501. In terms of domain architecture, KH spans 562-621 (PRLLSFRIDPELIGTVIGPGGRTIKGITERTNTKIDIEDGGIVTIASHDGAAAEAAQRII). The 69-residue stretch at 631-699 (GEVFSGTITR…NRGRINLTLR (69 aa)) folds into the S1 motif domain. Residues 700 to 721 (GVPQNGEETQSEPAPTPVAPLN) are disordered.

This sequence belongs to the polyribonucleotide nucleotidyltransferase family. Mg(2+) is required as a cofactor.

The protein localises to the cytoplasm. The catalysed reaction is RNA(n+1) + phosphate = RNA(n) + a ribonucleoside 5'-diphosphate. In terms of biological role, involved in mRNA degradation. Catalyzes the phosphorolysis of single-stranded polyribonucleotides processively in the 3'- to 5'-direction. The protein is Polyribonucleotide nucleotidyltransferase of Prochlorococcus marinus (strain MIT 9303).